Here is a 460-residue protein sequence, read N- to C-terminus: UDP-N-acetylmuramate--L-alanine ligase (460 aa).

118-124 (GAHGKTT) provides a ligand contact to ATP.

Belongs to the MurCDEF family.

The protein localises to the cytoplasm. The enzyme catalyses UDP-N-acetyl-alpha-D-muramate + L-alanine + ATP = UDP-N-acetyl-alpha-D-muramoyl-L-alanine + ADP + phosphate + H(+). Its pathway is cell wall biogenesis; peptidoglycan biosynthesis. Functionally, cell wall formation. The protein is UDP-N-acetylmuramate--L-alanine ligase of Clostridium botulinum (strain Alaska E43 / Type E3).